The following is a 726-amino-acid chain: Type VI secretion system spike protein VgrG1c (726 aa).

The segment at 502-522 is disordered; the sequence is ANATQSGTKSRSSKGGTPANF. Residues 507–518 show a composition bias toward low complexity; that stretch reads SGTKSRSSKGGT.

The protein belongs to the VgrG protein family. In terms of assembly, forms homomultimers. Part of the type VI secretion system (T6SS).

The protein localises to the secreted. In terms of biological role, part of the H1 type VI secretion system (H1-T6SS) specialized secretion system, which delivers several virulence factors in both prokaryotic and eukaryotic cells during infection. Allows the delivery of the Tse5/RhsP1 toxin to target cells where it exerts its toxicity. The protein is Type VI secretion system spike protein VgrG1c of Pseudomonas aeruginosa (strain ATCC 15692 / DSM 22644 / CIP 104116 / JCM 14847 / LMG 12228 / 1C / PRS 101 / PAO1).